The following is a 366-amino-acid chain: Palmitoyltransferase ZDHHC2 (366 aa).

The Cytoplasmic portion of the chain corresponds to 1–15 (MAPSGPGGVRRRCRR). A helical membrane pass occupies residues 16 to 36 (VLYWIPVVFISLLLGWSYYAY). The Lumenal segment spans residues 37–47 (AIQLCIVSMEN). A helical transmembrane segment spans residues 48–68 (IGEQVVCLMAYHLLFAMFVWS). At 69 to 169 (YWKTIFTLPM…NNCVGFSNYK (101 aa)) the chain is on the cytoplasmic side. Residues 126–176 (RYCDRCRLIKPDRCHHCSVCDKCILKMDHHCPWVNNCVGFSNYKFFLLFLA) enclose the DHHC domain. Residue cysteine 156 is the S-palmitoyl cysteine intermediate of the active site. Residues 170–190 (FFLLFLAYSLLYCLFIAATDL) traverse the membrane as a helical segment. Residues 191–207 (QYFIRFWTNGLPDTQAK) are Lumenal-facing. The chain crosses the membrane as a helical span at residues 208 to 228 (FHIMFLFFAAAMFSVSLSSLF). Topologically, residues 229–366 (GYHCWLVSKN…NPALTMENET (138 aa)) are cytoplasmic. 2 stretches are compositionally biased toward polar residues: residues 297–316 (VNQD…TAKN) and 332–349 (SHLL…SNSG). The interval 297–366 (VNQDPEQPST…NPALTMENET (70 aa)) is disordered. The tract at residues 298-366 (NQDPEQPSTP…NPALTMENET (69 aa)) is mediates localization to plasma membrane and recycling endosomes. A Non-canonical dileucine endocytic signal motif is present at residues 334–335 (LL). An NPxY-like endocytic signal motif is present at residues 357–360 (NPAL).

This sequence belongs to the DHHC palmitoyltransferase family. As to quaternary structure, monomer. Homodimer. The monomeric form has a higher catalytic activity. Post-translationally, autopalmitoylated.

The protein localises to the postsynaptic density. It is found in the postsynaptic recycling endosome membrane. The protein resides in the cell membrane. It localises to the endoplasmic reticulum membrane. Its subcellular location is the golgi apparatus membrane. The catalysed reaction is L-cysteinyl-[protein] + hexadecanoyl-CoA = S-hexadecanoyl-L-cysteinyl-[protein] + CoA. It carries out the reaction L-cysteinyl-[protein] + tetradecanoyl-CoA = S-tetradecanoyl-L-cysteinyl-[protein] + CoA. It catalyses the reaction L-cysteinyl-[protein] + octadecanoyl-CoA = S-octadecanoyl-L-cysteinyl-[protein] + CoA. Its function is as follows. Palmitoyltransferase that catalyzes the addition of palmitate onto various protein substrates and is involved in a variety of cellular processes. Has no stringent fatty acid selectivity and in addition to palmitate can also transfer onto target proteins myristate from tetradecanoyl-CoA and stearate from octadecanoyl-CoA. In the nervous system, plays a role in long term synaptic potentiation by palmitoylating AKAP5 through which it regulates protein trafficking from the dendritic recycling endosomes to the plasma membrane and controls both structural and functional plasticity at excitatory synapses. In dendrites, mediates the palmitoylation of DLG4 when synaptic activity decreases and induces synaptic clustering of DLG4 and associated AMPA-type glutamate receptors. Also mediates the de novo and turnover palmitoylation of RGS7BP, a shuttle for Gi/o-specific GTPase-activating proteins/GAPs, promoting its localization to the plasma membrane in response to the activation of G protein-coupled receptors. Through the localization of these GTPase-activating proteins/GAPs, it also probably plays a role in G protein-coupled receptors signaling in neurons. Also probably plays a role in cell adhesion by palmitoylating CD9 and CD151 to regulate their expression and function. Palmitoylates the endoplasmic reticulum protein CKAP4 and regulates its localization to the plasma membrane. Could also palmitoylate LCK and regulate its localization to the plasma membrane. The chain is Palmitoyltransferase ZDHHC2 from Rattus norvegicus (Rat).